A 103-amino-acid polypeptide reads, in one-letter code: Large ribosomal subunit protein P2 (103 aa).

The interval Leu-64–Phe-103 is disordered. Acidic residues predominate over residues Lys-90–Phe-103.

It belongs to the eukaryotic ribosomal protein P1/P2 family. Component of the large ribosomal subunit.

It localises to the cytoplasm. Functionally, plays an important role in the elongation step of protein synthesis. In Encephalitozoon cuniculi (strain GB-M1) (Microsporidian parasite), this protein is Large ribosomal subunit protein P2 (RPP2A).